The primary structure comprises 476 residues: Glycogen synthase (476 aa).

K15 serves as a coordination point for ADP-alpha-D-glucose.

This sequence belongs to the glycosyltransferase 1 family. Bacterial/plant glycogen synthase subfamily.

The enzyme catalyses [(1-&gt;4)-alpha-D-glucosyl](n) + ADP-alpha-D-glucose = [(1-&gt;4)-alpha-D-glucosyl](n+1) + ADP + H(+). It functions in the pathway glycan biosynthesis; glycogen biosynthesis. Synthesizes alpha-1,4-glucan chains using ADP-glucose. The polypeptide is Glycogen synthase (Streptococcus mutans serotype c (strain ATCC 700610 / UA159)).